A 290-amino-acid polypeptide reads, in one-letter code: Inorganic pyrophosphatase (290 aa).

Arginine 81 is a binding site for diphosphate. Residues aspartate 118, aspartate 123, and aspartate 155 each contribute to the Mg(2+) site.

Belongs to the PPase family. Mg(2+) serves as cofactor.

Its subcellular location is the cytoplasm. The catalysed reaction is diphosphate + H2O = 2 phosphate + H(+). This Neurospora crassa (strain ATCC 24698 / 74-OR23-1A / CBS 708.71 / DSM 1257 / FGSC 987) protein is Inorganic pyrophosphatase (ipp-1).